The following is a 247-amino-acid chain: Triosephosphate isomerase (247 aa).

10 to 12 (NWK) is a substrate binding site. The active-site Electrophile is the histidine 92. Residue glutamate 164 is the Proton acceptor of the active site. Residues glycine 170, serine 209, and 230-231 (GG) contribute to the substrate site.

This sequence belongs to the triosephosphate isomerase family. As to quaternary structure, homodimer.

It is found in the cytoplasm. It catalyses the reaction D-glyceraldehyde 3-phosphate = dihydroxyacetone phosphate. Its pathway is carbohydrate biosynthesis; gluconeogenesis. The protein operates within carbohydrate degradation; glycolysis; D-glyceraldehyde 3-phosphate from glycerone phosphate: step 1/1. Its function is as follows. Involved in the gluconeogenesis. Catalyzes stereospecifically the conversion of dihydroxyacetone phosphate (DHAP) to D-glyceraldehyde-3-phosphate (G3P). The protein is Triosephosphate isomerase of Alcanivorax borkumensis (strain ATCC 700651 / DSM 11573 / NCIMB 13689 / SK2).